A 243-amino-acid chain; its full sequence is MSATDRYSHQLLYATVRQRLLDDIAQGVYQAGQQIPTENELCTQYNVSRITIRKAISDLVADGVLIRWQGKGTFVQSQKVENALLTVSGFTDFGVSQGKATKEKVIEQERISAAPFCEKLNIPGNSEVFHLCRVMYLDKEPLFIDSSWIPLSRYPDFDEIYVEGSSTYQLFQERFDTRVVSDKKTIDIFAATRPQAKWLKCELGEPLFRISKIAFDQNDKPVHVSELFCRANRITLTIDNKRH.

The HTH gntR-type domain occupies Q10 to Q78. Positions E38–S57 form a DNA-binding region, H-T-H motif.

Its pathway is carbohydrate metabolism; fructoselysine degradation [regulation]. Functionally, may regulate the transcription of the frlABCDR operon, involved in the utilization of fructoselysine and psicoselysine. In Escherichia coli O157:H7, this protein is Probable fructoselysine utilization operon transcriptional repressor (frlR).